Consider the following 272-residue polypeptide: Regulatory protein RecX (272 aa).

It belongs to the RecX family.

It localises to the cytoplasm. Its function is as follows. Modulates RecA activity. This Staphylococcus aureus (strain Newman) protein is Regulatory protein RecX.